Consider the following 236-residue polypeptide: Uridylate kinase (236 aa).

10 to 13 serves as a coordination point for ATP; it reads KLSG. Glycine 52 contacts UMP. Residues glycine 53 and arginine 57 each contribute to the ATP site. Residues aspartate 72 and 133-140 contribute to the UMP site; that span reads TGNPFFTT. The ATP site is built by threonine 160, tyrosine 166, and aspartate 169.

This sequence belongs to the UMP kinase family. Homohexamer.

The protein localises to the cytoplasm. It carries out the reaction UMP + ATP = UDP + ADP. It participates in pyrimidine metabolism; CTP biosynthesis via de novo pathway; UDP from UMP (UMPK route): step 1/1. Inhibited by UTP. Its function is as follows. Catalyzes the reversible phosphorylation of UMP to UDP. The sequence is that of Uridylate kinase from Cupriavidus necator (strain ATCC 17699 / DSM 428 / KCTC 22496 / NCIMB 10442 / H16 / Stanier 337) (Ralstonia eutropha).